The following is a 684-amino-acid chain: Threonine--tRNA ligase (684 aa).

The TGS domain occupies 1 to 66 (MTAVASSAPA…DTDVEVTPVA (66 aa)). The segment at 261 to 567 (DHRKLGVELD…LTEHYAGAFP (307 aa)) is catalytic. C366, H417, and H544 together coordinate Zn(2+).

It belongs to the class-II aminoacyl-tRNA synthetase family. Homodimer. It depends on Zn(2+) as a cofactor.

The protein resides in the cytoplasm. It catalyses the reaction tRNA(Thr) + L-threonine + ATP = L-threonyl-tRNA(Thr) + AMP + diphosphate + H(+). Functionally, catalyzes the attachment of threonine to tRNA(Thr) in a two-step reaction: L-threonine is first activated by ATP to form Thr-AMP and then transferred to the acceptor end of tRNA(Thr). Also edits incorrectly charged L-seryl-tRNA(Thr). In Mycolicibacterium smegmatis (strain ATCC 700084 / mc(2)155) (Mycobacterium smegmatis), this protein is Threonine--tRNA ligase.